A 569-amino-acid polypeptide reads, in one-letter code: Ribosome-inactivating protein SNAI' (569 aa).

The N-terminal stretch at 1-28 (MKVVATILYLVVLAICGLGIHGAHPTHS) is a signal peptide. Asn-40 is a glycosylation site (N-linked (GlcNAc...) asparagine). Glu-201 is an active-site residue. Intrachain disulfides connect Cys-286-Cys-311, Cys-328-Cys-347, and Cys-369-Cys-381. 2 consecutive Ricin B-type lectin domains span residues 315-435 (EEVT…WIVG) and 437-565 (VEPL…WIAS). A 1-alpha repeat occupies 325–365 (DGFCAEVKNGDEKDGTPVQLSSCGEQSNQQWTFSTDGTIQS). Residues 366–401 (LGKCLTTSSSVMIYNCKVVPPESTKWVVSIDGTITN) form a 1-beta repeat. The stretch at 404-436 (SGLVLTAPKAAEGTLVSLEKNVHAARQGWIVGN) is one 1-gamma repeat. One copy of the 2-alpha repeat lies at 448–488 (EQMCLETNPGNNDVSLGDCSVKSASKVDQKWALYGDGTIRV). 2 cysteine pairs are disulfide-bonded: Cys-451-Cys-466 and Cys-495-Cys-512. One copy of the 2-beta repeat lies at 492–530 (RSLCVTSEGKSSNEPIIILKCLGWANQRWVFNTDGTISN). The stretch at 533–566 (SKLVMHVDQNDVPLRKIILSHPSGTSNQQWIAST) is one 2-gamma repeat.

This sequence in the N-terminal section; belongs to the ribosome-inactivating protein family. Type 2 RIP subfamily. In terms of assembly, disulfide-linked dimer of A and B chains.

The catalysed reaction is Endohydrolysis of the N-glycosidic bond at one specific adenosine on the 28S rRNA.. Its function is as follows. The A chain is responsible for inhibiting protein synthesis through the catalytic inactivation of 60S ribosomal subunits by removing adenine from position 4,324 of 28S rRNA. The B chain binds to cell receptors and probably facilitates the entry into the cell of the A chain; B chains are also responsible for cell agglutination (lectin activity). Agglutination is inhibited by Neu5Ac(alpha2,6)lactose, and N-linked glycoproteins such as fetuin and orosomucoid. The chain is Ribosome-inactivating protein SNAI' from Sambucus nigra (European elder).